Here is a 156-residue protein sequence, read N- to C-terminus: Lipoprotein signal peptidase (156 aa).

Transmembrane regions (helical) follow at residues 5 to 25 (FKFI…DQWV), 64 to 84 (YLHL…RTLL), and 89 to 109 (IAFG…FIHG). Residues D113 and D130 contribute to the active site. Residues 122 to 142 (NFAIFNVADVMINISVALILI) form a helical membrane-spanning segment.

This sequence belongs to the peptidase A8 family.

It is found in the cell inner membrane. The catalysed reaction is Release of signal peptides from bacterial membrane prolipoproteins. Hydrolyzes -Xaa-Yaa-Zaa-|-(S,diacylglyceryl)Cys-, in which Xaa is hydrophobic (preferably Leu), and Yaa (Ala or Ser) and Zaa (Gly or Ala) have small, neutral side chains.. The protein operates within protein modification; lipoprotein biosynthesis (signal peptide cleavage). In terms of biological role, this protein specifically catalyzes the removal of signal peptides from prolipoproteins. The sequence is that of Lipoprotein signal peptidase from Campylobacter jejuni subsp. jejuni serotype O:2 (strain ATCC 700819 / NCTC 11168).